The chain runs to 137 residues: Large ribosomal subunit protein uL16 (137 aa).

Belongs to the universal ribosomal protein uL16 family. In terms of assembly, part of the 50S ribosomal subunit.

Its function is as follows. Binds 23S rRNA and is also seen to make contacts with the A and possibly P site tRNAs. In Magnetococcus marinus (strain ATCC BAA-1437 / JCM 17883 / MC-1), this protein is Large ribosomal subunit protein uL16.